The sequence spans 840 residues: Protein translocase subunit SecA (840 aa).

Residues Q87, 105–109 (GEGKT), and D494 each bind ATP. The interval 791–840 (LRKEQEDQPMFFGPAEGAGQKPQTRKDRKVGRNDPCPCGSGKKYKKCCGK) is disordered. Zn(2+) contacts are provided by C826, C828, C837, and C838.

Belongs to the SecA family. Monomer and homodimer. Part of the essential Sec protein translocation apparatus which comprises SecA, SecYEG and auxiliary proteins SecDF-YajC and YidC. The cofactor is Zn(2+).

Its subcellular location is the cell inner membrane. It localises to the cytoplasm. The enzyme catalyses ATP + H2O + cellular proteinSide 1 = ADP + phosphate + cellular proteinSide 2.. In terms of biological role, part of the Sec protein translocase complex. Interacts with the SecYEG preprotein conducting channel. Has a central role in coupling the hydrolysis of ATP to the transfer of proteins into and across the cell membrane, serving as an ATP-driven molecular motor driving the stepwise translocation of polypeptide chains across the membrane. This Syntrophobacter fumaroxidans (strain DSM 10017 / MPOB) protein is Protein translocase subunit SecA.